We begin with the raw amino-acid sequence, 283 residues long: Elongation factor Ts (283 aa).

The segment at 80–83 (TDFV) is involved in Mg(2+) ion dislocation from EF-Tu.

It belongs to the EF-Ts family.

It localises to the cytoplasm. Its function is as follows. Associates with the EF-Tu.GDP complex and induces the exchange of GDP to GTP. It remains bound to the aminoacyl-tRNA.EF-Tu.GTP complex up to the GTP hydrolysis stage on the ribosome. The sequence is that of Elongation factor Ts from Salmonella choleraesuis (strain SC-B67).